Reading from the N-terminus, the 276-residue chain is 3beta-hydroxysteroid dehydrogenase (276 aa).

NADP(+)-binding positions include 70–71 (DV), N97, Y162, and K166. The active-site Proton acceptor is the Y162.

It belongs to the short-chain dehydrogenases/reductases (SDR) family.

It carries out the reaction 3-oxo-5beta-cholan-24-oate + NADPH + H(+) = isolithocholate + NADP(+). It catalyses the reaction 12alpha-hydroxy-3-oxo-5beta-cholan-24-oate + NADPH + H(+) = isodeoxycholate + NADP(+). The enzyme catalyses 12alpha-hydroxy-3-oxo-5beta-cholan-24-oate + NADH + H(+) = isodeoxycholate + NAD(+). The catalysed reaction is 7alpha,12alpha-dihydroxy-3-oxo-5beta-cholan-24-oate + NADPH + H(+) = isocholate + NADP(+). It carries out the reaction 3-oxochenodeoxycholate + NADPH + H(+) = isochenodeoxycholate + NADP(+). In terms of biological role, involved in the modification of secondary bile acids into iso-bile acids (3beta-bile acids) via epimerization of the 3-OH group through a 3-oxo-intermediate. Catalyzes the reduction of 12-alpha-hydroxy-3-oxo-5-beta-cholan-24-oate (3-oxo-DCA) and 3-oxo-5-beta-cholan-24-oate (3-oxo-LCA) to yield isodeoxycholate (isoDCA) and isolithocholate (isoLCA), respectively. Is also able to catalyze the reduction of 3-dehydrocholate (3-oxo-CA or 7alpha,12alpha-dihydroxy-3-oxo-5beta-cholan-24-oate) and 7-alpha-hydroxy-3-oxo-5-beta-cholan-24-oate (3-oxo-CDCA), into isocholate (isoCA) and isochenodeoxycholate (isoCDCA), respectively. Accepts both NADPH and NADH as cosubstrates. The conversion of the abundant bile acid deoxycholate (DCA) into isoDCA by the gut bacterium R.gnavus favors the growth of the keystone commensal genus Bacteroides, since isoDCA is less cytotoxic than its parent compound, DCA; iso-bile acids have thus a potential role in modulating gut community composition. The chain is 3beta-hydroxysteroid dehydrogenase from Mediterraneibacter gnavus (strain ATCC 29149 / DSM 114966 / JCM 6515 / VPI C7-9) (Ruminococcus gnavus).